A 247-amino-acid chain; its full sequence is GTP cyclohydrolase 1 type 2 homolog (247 aa).

A divalent metal cation-binding residues include H63, H64, D101, H215, and E219.

This sequence belongs to the GTP cyclohydrolase I type 2/NIF3 family. In terms of assembly, homohexamer.

The polypeptide is GTP cyclohydrolase 1 type 2 homolog (Buchnera aphidicola subsp. Schizaphis graminum (strain Sg)).